Consider the following 682-residue polypeptide: Potassium-transporting ATPase ATP-binding subunit (682 aa).

4 consecutive transmembrane segments (helical) span residues proline 34–alanine 54, alanine 62–alanine 82, isoleucine 219–leucine 239, and valine 254–isoleucine 274. Aspartate 307 acts as the 4-aspartylphosphate intermediate in catalysis. ATP is bound by residues aspartate 344, glutamate 348, phenylalanine 377 to serine 384, and lysine 395. Positions 518 and 522 each coordinate Mg(2+). The next 3 membrane-spanning stretches (helical) occupy residues phenylalanine 588–methionine 608, alanine 616–leucine 636, and isoleucine 656–leucine 676.

The protein belongs to the cation transport ATPase (P-type) (TC 3.A.3) family. Type IA subfamily. In terms of assembly, the system is composed of three essential subunits: KdpA, KdpB and KdpC.

It is found in the cell inner membrane. It carries out the reaction K(+)(out) + ATP + H2O = K(+)(in) + ADP + phosphate + H(+). In terms of biological role, part of the high-affinity ATP-driven potassium transport (or Kdp) system, which catalyzes the hydrolysis of ATP coupled with the electrogenic transport of potassium into the cytoplasm. This subunit is responsible for energy coupling to the transport system and for the release of the potassium ions to the cytoplasm. The chain is Potassium-transporting ATPase ATP-binding subunit from Escherichia coli O9:H4 (strain HS).